The primary structure comprises 276 residues: Putative pyridoxine kinase (276 aa).

N139 provides a ligand contact to ATP. E142 contacts Mg(2+). ATP contacts are provided by residues 176-180 (KGGKA), D188, G213, and K238.

Belongs to the ThiD family.

The enzyme catalyses pyridoxal + ATP = pyridoxal 5'-phosphate + ADP + H(+). In terms of biological role, phosphorylates B6 vitamers; functions in a salvage pathway. Uses pyridoxal, pyridoxine, and pyridoxamine as substrates. This is Putative pyridoxine kinase (pdxK) from Staphylococcus epidermidis (strain ATCC 12228 / FDA PCI 1200).